The following is a 281-amino-acid chain: Aldo-keto reductase MAP_3007 (281 aa).

The active-site Proton donor is the Tyr56. NADPH is bound by residues Leu196, Ile234, Arg236, Ser237, Ala238, Ser245, and Arg272.

This sequence belongs to the aldo/keto reductase family.

The chain is Aldo-keto reductase MAP_3007 from Mycolicibacterium paratuberculosis (strain ATCC BAA-968 / K-10) (Mycobacterium paratuberculosis).